Consider the following 218-residue polypeptide: OPA3-like protein (218 aa).

Positions 129–179 (NEIMEKQFVLQKKKNELQSSTEEIDSTEKDFDELHKVILKVERELHTLRQN) form a coiled coil. Residues 175-218 (TLRQNTPSQNEQAEATPSKEIPRETVSEKADHPPSSNTKSVSTG) are disordered. Polar residues predominate over residues 176 to 189 (LRQNTPSQNEQAEA). Basic and acidic residues predominate over residues 194 to 206 (EIPRETVSEKADH). A compositionally biased stretch (polar residues) spans 208–218 (PSSNTKSVSTG).

It belongs to the OPA3 family.

In Schizosaccharomyces pombe (strain 972 / ATCC 24843) (Fission yeast), this protein is OPA3-like protein.